Here is a 126-residue protein sequence, read N- to C-terminus: SH2 domain-containing protein 1A (126 aa).

One can recognise an SH2 domain in the interval V6–K104. Residues E67–Q92 form an interaction with FYN SH3 domain region. Residue K89 is modified to N6-acetyllysine. The disordered stretch occupies residues Y100 to P126.

As to quaternary structure, interacts with CD84, CD244, LY9, SLAMF1 and FYN. Interacts with NTRK1, NTRK2 and NTRK3. As to expression, T-cells.

The protein localises to the cytoplasm. Its function is as follows. Cytoplasmic adapter regulating receptors of the signaling lymphocytic activation molecule (SLAM) family such as SLAMF1, CD244, LY9, CD84, SLAMF6 and SLAMF7. In SLAM signaling seems to cooperate with SH2D1B/EAT-2. Initially it has been proposed that association with SLAMF1 prevents SLAMF1 binding to inhibitory effectors including INPP5D/SHIP1 and PTPN11/SHP-2. However, by simultaneous interactions, recruits FYN which subsequently phosphorylates and activates SLAMF1. Positively regulates CD244/2B4- and CD84-mediated natural killer (NK) cell functions. Can also promote CD48-, SLAMF6 -, LY9-, and SLAMF7-mediated NK cell activation. In the context of NK cell-mediated cytotoxicity enhances conjugate formation with target cells. May also regulate the activity of the neurotrophin receptors NTRK1, NTRK2 and NTRK3. In Mus musculus (Mouse), this protein is SH2 domain-containing protein 1A (Sh2d1a).